The sequence spans 196 residues: Ribonuclease HII (196 aa).

Residues 15–196 enclose the RNase H type-2 domain; the sequence is YIVAGIDEAG…RKSFRYSCFI (182 aa). A divalent metal cation is bound by residues Asp-21, Glu-22, and Asp-112.

Belongs to the RNase HII family. Mn(2+) serves as cofactor. It depends on Mg(2+) as a cofactor.

The protein resides in the cytoplasm. The enzyme catalyses Endonucleolytic cleavage to 5'-phosphomonoester.. Endonuclease that specifically degrades the RNA of RNA-DNA hybrids. The chain is Ribonuclease HII from Rickettsia canadensis (strain McKiel).